The following is a 406-amino-acid chain: Probable tRNA sulfurtransferase (406 aa).

Residues 60–166 (DQVMNRLKLV…LNGIFLSSET (107 aa)) enclose the THUMP domain. Residues 184–185 (MM), 209–210 (HF), Arg266, Gly288, and Gln297 each bind ATP.

This sequence belongs to the ThiI family.

Its subcellular location is the cytoplasm. The catalysed reaction is [ThiI sulfur-carrier protein]-S-sulfanyl-L-cysteine + a uridine in tRNA + 2 reduced [2Fe-2S]-[ferredoxin] + ATP + H(+) = [ThiI sulfur-carrier protein]-L-cysteine + a 4-thiouridine in tRNA + 2 oxidized [2Fe-2S]-[ferredoxin] + AMP + diphosphate. It carries out the reaction [ThiS sulfur-carrier protein]-C-terminal Gly-Gly-AMP + S-sulfanyl-L-cysteinyl-[cysteine desulfurase] + AH2 = [ThiS sulfur-carrier protein]-C-terminal-Gly-aminoethanethioate + L-cysteinyl-[cysteine desulfurase] + A + AMP + 2 H(+). It participates in cofactor biosynthesis; thiamine diphosphate biosynthesis. Functionally, catalyzes the ATP-dependent transfer of a sulfur to tRNA to produce 4-thiouridine in position 8 of tRNAs, which functions as a near-UV photosensor. Also catalyzes the transfer of sulfur to the sulfur carrier protein ThiS, forming ThiS-thiocarboxylate. This is a step in the synthesis of thiazole, in the thiamine biosynthesis pathway. The sulfur is donated as persulfide by IscS. The polypeptide is Probable tRNA sulfurtransferase (Limosilactobacillus reuteri subsp. reuteri (strain JCM 1112) (Lactobacillus reuteri)).